The following is a 589-amino-acid chain: Acyl-CoA ligase SID4 (589 aa).

The short motif at 12–20 (RLQQTLNHI) is the PTS2-type peroxisomal targeting signal element. Residues 228–236 (TSGSTGNPK), 367–372 (SSYGLT), D458, and R473 contribute to the ATP site. T372 is a substrate binding site. CoA-binding positions include 481 to 483 (GGE), K547, and 555 to 557 (FGL). K572 provides a ligand contact to ATP.

Belongs to the ATP-dependent AMP-binding enzyme family.

The protein localises to the peroxisome. It participates in siderophore biosynthesis. Functionally, acyl-CoA ligase; part of the gene cluster that mediates the biosynthesis of hydroxamate-containing siderophores that play a critical role in virulence via intracellular iron acquisition during macrophage infection. This Ajellomyces capsulatus (Darling's disease fungus) protein is Acyl-CoA ligase SID4.